A 101-amino-acid chain; its full sequence is Integration host factor subunit beta (101 aa).

Residues 57-77 (PARAGRNPRTGAHVPVDQKSV) are disordered.

It belongs to the bacterial histone-like protein family. Heterodimer of an alpha and a beta chain.

In terms of biological role, this protein is one of the two subunits of integration host factor, a specific DNA-binding protein that functions in genetic recombination as well as in transcriptional and translational control. The chain is Integration host factor subunit beta from Rhodopseudomonas palustris (strain HaA2).